Reading from the N-terminus, the 618-residue chain is Uptake hydrogenase large subunit (618 aa).

Residues C75, C78, C597, and C600 each contribute to the Ni(2+) site.

Belongs to the [NiFe]/[NiFeSe] hydrogenase large subunit family. As to quaternary structure, heterodimer of a large and a small subunit. It depends on Ni(2+) as a cofactor.

It localises to the cell membrane. The catalysed reaction is H2 + A = AH2. Its function is as follows. This enzyme recycles the H(2) produced by nitrogenase to increase the production of ATP and to protect nitrogenase against inhibition or damage by O(2) under carbon- or phosphate-limited conditions. The chain is Uptake hydrogenase large subunit (hupB) from Rubrivivax gelatinosus (Rhodocyclus gelatinosus).